Reading from the N-terminus, the 491-residue chain is Protein nucleotidyltransferase YdiU (491 aa).

Residues Gly-94, Gly-96, Arg-97, Lys-117, Asp-129, Gly-130, Arg-180, and Arg-187 each contribute to the ATP site. Asp-256 acts as the Proton acceptor in catalysis. Positions 257 and 266 each coordinate Mg(2+). Asp-266 lines the ATP pocket.

This sequence belongs to the SELO family. Mg(2+) serves as cofactor. It depends on Mn(2+) as a cofactor.

It carries out the reaction L-seryl-[protein] + ATP = 3-O-(5'-adenylyl)-L-seryl-[protein] + diphosphate. The enzyme catalyses L-threonyl-[protein] + ATP = 3-O-(5'-adenylyl)-L-threonyl-[protein] + diphosphate. It catalyses the reaction L-tyrosyl-[protein] + ATP = O-(5'-adenylyl)-L-tyrosyl-[protein] + diphosphate. The catalysed reaction is L-histidyl-[protein] + UTP = N(tele)-(5'-uridylyl)-L-histidyl-[protein] + diphosphate. It carries out the reaction L-seryl-[protein] + UTP = O-(5'-uridylyl)-L-seryl-[protein] + diphosphate. The enzyme catalyses L-tyrosyl-[protein] + UTP = O-(5'-uridylyl)-L-tyrosyl-[protein] + diphosphate. Functionally, nucleotidyltransferase involved in the post-translational modification of proteins. It can catalyze the addition of adenosine monophosphate (AMP) or uridine monophosphate (UMP) to a protein, resulting in modifications known as AMPylation and UMPylation. This Clostridium botulinum (strain Okra / Type B1) protein is Protein nucleotidyltransferase YdiU.